Consider the following 718-residue polypeptide: DNA topoisomerase 1 (718 aa).

The region spanning 9 to 151 is the Toprim domain; the sequence is HEVIICEKPK…KFSTLTREEI (143 aa). 2 residues coordinate Mg(2+): E15 and D113. The Topo IA-type catalytic domain occupies 162–571; that stretch reads DYGQVDSGAA…EAITEVRSIL (410 aa). The segment at 202–207 is interaction with DNA; sequence SAGRVQ. Y320 functions as the O-(5'-phospho-DNA)-tyrosine intermediate in the catalytic mechanism. A compositionally biased stretch (basic and acidic residues) spans 361–371; the sequence is HEGKKEDDAHP. Positions 361–380 are disordered; the sequence is HEGKKEDDAHPAIHPTGLLP. 2 C4-type zinc fingers span residues 598–626 and 680–706; these read CPACGGKLVIKYSPRNRSTFVGCSSYPDC and CPECGSDLIKRSGRYGEFVGCKGFPKC.

It belongs to the type IA topoisomerase family. In terms of assembly, monomer. The cofactor is Mg(2+).

It catalyses the reaction ATP-independent breakage of single-stranded DNA, followed by passage and rejoining.. Functionally, releases the supercoiling and torsional tension of DNA, which is introduced during the DNA replication and transcription, by transiently cleaving and rejoining one strand of the DNA duplex. Introduces a single-strand break via transesterification at a target site in duplex DNA. The scissile phosphodiester is attacked by the catalytic tyrosine of the enzyme, resulting in the formation of a DNA-(5'-phosphotyrosyl)-enzyme intermediate and the expulsion of a 3'-OH DNA strand. The free DNA strand then undergoes passage around the unbroken strand, thus removing DNA supercoils. Finally, in the religation step, the DNA 3'-OH attacks the covalent intermediate to expel the active-site tyrosine and restore the DNA phosphodiester backbone. This chain is DNA topoisomerase 1, found in Methanothermobacter thermautotrophicus (strain ATCC 29096 / DSM 1053 / JCM 10044 / NBRC 100330 / Delta H) (Methanobacterium thermoautotrophicum).